The chain runs to 428 residues: UPF0597 protein BF3772 (428 aa).

It belongs to the UPF0597 family.

This is UPF0597 protein BF3772 from Bacteroides fragilis (strain YCH46).